The following is a 72-amino-acid chain: Translation initiation factor IF-1 (72 aa).

In terms of domain architecture, S1-like spans 1 to 72; sequence MAKQSAIEQD…SKGRIVFRYK (72 aa).

This sequence belongs to the IF-1 family. As to quaternary structure, component of the 30S ribosomal translation pre-initiation complex which assembles on the 30S ribosome in the order IF-2 and IF-3, IF-1 and N-formylmethionyl-tRNA(fMet); mRNA recruitment can occur at any time during PIC assembly.

The protein resides in the cytoplasm. In terms of biological role, one of the essential components for the initiation of protein synthesis. Stabilizes the binding of IF-2 and IF-3 on the 30S subunit to which N-formylmethionyl-tRNA(fMet) subsequently binds. Helps modulate mRNA selection, yielding the 30S pre-initiation complex (PIC). Upon addition of the 50S ribosomal subunit IF-1, IF-2 and IF-3 are released leaving the mature 70S translation initiation complex. The chain is Translation initiation factor IF-1 from Bacteroides fragilis (strain ATCC 25285 / DSM 2151 / CCUG 4856 / JCM 11019 / LMG 10263 / NCTC 9343 / Onslow / VPI 2553 / EN-2).